Consider the following 240-residue polypeptide: Sugar fermentation stimulation protein homolog (240 aa).

The protein belongs to the SfsA family.

The protein is Sugar fermentation stimulation protein homolog of Saccharolobus islandicus (strain L.S.2.15 / Lassen #1) (Sulfolobus islandicus).